Here is a 299-residue protein sequence, read N- to C-terminus: Circadian clock oscillator protein KaiA (299 aa).

The tract at residues 9 to 148 (SRPQIFICTL…LQLSKACRLP (140 aa)) is psR domain, binds oxidized quinones. The 171-residue stretch at 9-179 (SRPQIFICTL…RLSQKLKERL (171 aa)) folds into the KaiA N-terminal domain. The flexible linker stretch occupies residues 180 to 188 (GYLGVYYKR). The KaiA C-terminal domain occupies 189-297 (NPQQFFHKLT…CEMYRRSIPK (109 aa)).

Homodimer. The KaiABC complex composition changes during the circadian cycle to control KaiC phosphorylation. Complexes KaiC(6), KaiA(2-4):KaiC(6), KaiB(6):KaiC(6) and KaiC(6):KaiB(6):KaiA(12) are among the most important forms, many form cooperatively. KaiA and CikA bind to the same region of the KaiB(fs) form and therefore compete.

Its function is as follows. Key component of the KaiABC oscillator complex, which constitutes the main circadian regulator in cyanobacteria. Complex composition changes during the circadian cycle to control KaiC phosphorylation. KaiA stimulates KaiC autophosphorylation, while KaiB sequesters KaiA, leading to KaiC autodephosphorylation. KaiA binding to the KaiC CII domain during the subjective day yields KaiA(2-4):KaiC(6) complexes which stimulate KaiC autophosphorylation. Phospho-Ser-431 KaiC accumulation triggers binding of KaiB during the subjective night to form the KaiB(6):KaiC(6) complex, leading to changes in the output regulators CikA and SasA. KaiB(6):KaiC(6) formation exposes a site for KaiA binding on KaiB that sequesters KaiA from KaiC's CII domain, making the KaiC(6):KaiB(6):KaiA(12) complex resulting in KaiC autodephosphorylation. Complete dephosphorylation of KaiC leads to dissociation of KaiA(2):KaiB(1), completing 1 cycle of the Kai oscillator. Functionally, binds oxidized quinones via the N-terminal PsR domain, allowing it to sense redox changes and possibly mediate clock input. The polypeptide is Circadian clock oscillator protein KaiA (Acaryochloris marina (strain MBIC 11017)).